Reading from the N-terminus, the 248-residue chain is Triosephosphate isomerase (248 aa).

Residue 9–11 participates in substrate binding; sequence NWK. Catalysis depends on H94, which acts as the Electrophile. E166 acts as the Proton acceptor in catalysis. Residues G172, S212, and 233–234 contribute to the substrate site; that span reads GG.

It belongs to the triosephosphate isomerase family. In terms of assembly, homodimer.

It localises to the cytoplasm. It catalyses the reaction D-glyceraldehyde 3-phosphate = dihydroxyacetone phosphate. It functions in the pathway carbohydrate biosynthesis; gluconeogenesis. Its pathway is carbohydrate degradation; glycolysis; D-glyceraldehyde 3-phosphate from glycerone phosphate: step 1/1. Involved in the gluconeogenesis. Catalyzes stereospecifically the conversion of dihydroxyacetone phosphate (DHAP) to D-glyceraldehyde-3-phosphate (G3P). The chain is Triosephosphate isomerase from Clostridium acetobutylicum (strain ATCC 824 / DSM 792 / JCM 1419 / IAM 19013 / LMG 5710 / NBRC 13948 / NRRL B-527 / VKM B-1787 / 2291 / W).